A 447-amino-acid polypeptide reads, in one-letter code: Adenylosuccinate synthetase (447 aa).

Residues 35-41 (GDEGKGK) and 63-65 (GHT) contribute to the GTP site. Residue Asp-36 is the Proton acceptor of the active site. Mg(2+)-binding residues include Asp-36 and Gly-63. IMP contacts are provided by residues 36–39 (DEGK), 61–64 (NAGH), Thr-153, Arg-167, Asn-245, Thr-260, and Arg-324. Catalysis depends on His-64, which acts as the Proton donor. 320 to 326 (VTTKRKR) is a binding site for substrate. GTP-binding positions include Arg-326, 352–354 (KLD), and 435–437 (GVG).

The protein belongs to the adenylosuccinate synthetase family. Homodimer. Mg(2+) is required as a cofactor.

The protein resides in the cytoplasm. The enzyme catalyses IMP + L-aspartate + GTP = N(6)-(1,2-dicarboxyethyl)-AMP + GDP + phosphate + 2 H(+). Its pathway is purine metabolism; AMP biosynthesis via de novo pathway; AMP from IMP: step 1/2. Its function is as follows. Plays an important role in the de novo pathway and in the salvage pathway of purine nucleotide biosynthesis. Catalyzes the first committed step in the biosynthesis of AMP from IMP. The polypeptide is Adenylosuccinate synthetase (Drosophila erecta (Fruit fly)).